A 441-amino-acid polypeptide reads, in one-letter code: Phenoloxidase-activating enzyme (441 aa).

Residues 1–21 form the signal peptide; the sequence is MFLIWTFIVAVLAIQTKSVVA. Q22 is modified (pyrrolidone carboxylic acid). Clip domains are found at residues 23 to 76 and 77 to 127; these read SCRT…AVCC and PCNA…SICC. Cystine bridges form between C24–C75, C34–C65, C40–C76, C78–C126, C88–C117, C94–C127, C164–C305, and C203–C219. One can recognise a Peptidase S1 domain in the interval 174–440; that stretch reads IVGGAPASID…YLPWIQNTIE (267 aa). H218 serves as the catalytic Charge relay system. Ca(2+) contacts are provided by E237, N239, N242, and D246. N239 carries an N-linked (GlcNAc...) asparagine glycan. The active-site Charge relay system is D285. N334 carries an N-linked (GlcNAc...) asparagine glycan. Intrachain disulfides connect C356/C377 and C387/C416. Catalysis depends on S391, which acts as the Charge relay system.

This sequence belongs to the peptidase S1 family. CLIP subfamily. In terms of assembly, in the active form, heterodimer of a light chain and a heavy chain; disulfide-linked. Post-translationally, proteolytically cleaved for activation. Cleavage produces a light chain and a catalytic heavy chain which remains covalently associated probably through an interchain disulfide bond. Glycosylated.

With respect to regulation, stabilized by calcium. Inhibited by di-isopropyl phosphorofluoridate (DFP), phenylmethanesulfonylfluoride (PMSF), p-nitrophenyl-p'-guanidinobenzonate (p-NPGB), p-chloromercuribenzoate (PCMB), ethylenediaminetetraacetic acid (EDTA), urea and CI-13c. In terms of biological role, endopeptidase with selective post-Arg cleavage site. Activates prophenoloxidase. Has a probable role in the melanization process as part of the innate immune response. The protein is Phenoloxidase-activating enzyme of Bombyx mori (Silk moth).